The following is an 88-amino-acid chain: Homeobox protein knotted-1-like 1 (88 aa).

The ELK domain occupies 4 to 24 (ELKLELKQGFKSRIEDVREEI). Positions 25–88 (LRKRRAGKLP…NQRKRNWHNN (64 aa)) form a DNA-binding region, homeobox; TALE-type.

This sequence belongs to the TALE/KNOX homeobox family. As to expression, highly expressed in the roots.

Its subcellular location is the nucleus. In Zea mays (Maize), this protein is Homeobox protein knotted-1-like 1 (KNOX1).